The chain runs to 375 residues: Hydrogenase-1 small chain (375 aa).

The segment at residues 1-47 (MNTNNEETFYQAMRRKGVSRRSFLKYCSLAATSLGLGAAMTPRIAWA) is a signal peptide (tat-type signal). [4Fe-4S] cluster contacts are provided by Cys64, Cys67, Cys162, Cys196, His234, Cys237, Cys262, and Cys268. Residues Cys277, Cys296, and Cys299 each coordinate [3Fe-4S] cluster. The tract at residues 353–375 (HNRHKQQLADAGQQSPDNEDKQA) is disordered.

The protein belongs to the [NiFe]/[NiFeSe] hydrogenase small subunit family. Heterodimer of a large and a small subunit. [4Fe-4S] cluster is required as a cofactor. It depends on [3Fe-4S] cluster as a cofactor. Post-translationally, predicted to be exported by the Tat system. The position of the signal peptide cleavage has not been experimentally proven.

The protein localises to the cell membrane. It carries out the reaction H2 + A = AH2. In Citrobacter freundii, this protein is Hydrogenase-1 small chain (hyaA).